Consider the following 1217-residue polypeptide: DNA-directed RNA polymerase subunit beta' (1217 aa).

Zn(2+)-binding residues include Cys60, Cys62, Cys75, and Cys78. Mg(2+)-binding residues include Asp449, Asp451, and Asp453. Cys821, Cys895, Cys902, and Cys905 together coordinate Zn(2+).

Belongs to the RNA polymerase beta' chain family. As to quaternary structure, the RNAP catalytic core consists of 2 alpha, 1 beta, 1 beta' and 1 omega subunit. When a sigma factor is associated with the core the holoenzyme is formed, which can initiate transcription. Mg(2+) serves as cofactor. It depends on Zn(2+) as a cofactor.

The enzyme catalyses RNA(n) + a ribonucleoside 5'-triphosphate = RNA(n+1) + diphosphate. Its function is as follows. DNA-dependent RNA polymerase catalyzes the transcription of DNA into RNA using the four ribonucleoside triphosphates as substrates. This Lactobacillus acidophilus (strain ATCC 700396 / NCK56 / N2 / NCFM) protein is DNA-directed RNA polymerase subunit beta'.